A 447-amino-acid chain; its full sequence is Rab GDP dissociation inhibitor alpha (447 aa).

A Phosphoserine modification is found at S427.

This sequence belongs to the Rab GDI family. Interacts with RHOH. Interacts with the non-phosphorylated forms of RAB1A, RAB3A, RAB5A, RAB5B, RAB5C, RAB8A, RAB8B, RAB12, RAB35, and RAB43. Interacts with RAB10. In terms of tissue distribution, high expression in brain, lower in other tissues.

It is found in the cytoplasm. It localises to the golgi apparatus. The protein localises to the trans-Golgi network. In terms of biological role, regulates the GDP/GTP exchange reaction of most Rab proteins by inhibiting the dissociation of GDP from them, and the subsequent binding of GTP to them. Promotes the dissociation of GDP-bound Rab proteins from the membrane and inhibits their activation. Promotes the dissociation of RAB1A, RAB3A, RAB5A and RAB10 from membranes. The polypeptide is Rab GDP dissociation inhibitor alpha (Gdi1) (Mus musculus (Mouse)).